The following is a 1090-amino-acid chain: MMSFGSADALLGAPFAPLHGGGSLHYSLSRKAGPGGTRSAAGSSSGFHSWARTSVSSVSASPSRFRGAASSTDSLDTLSNGPEGCVVAAVAARSEKEQLQALNDRFAGYIDKVRQLEAHNRSLEGEAAALRQQQAGRAAMGELYEREVREMRGAVLRLGAARGQLRLEQEHLLEDIAHVRQRLDEEARQREEAEAAARALARFAQEAEAARVELQKKAQALQEECGYLRRHHQEEVGELLGQIQGCGAAQAQAQAEARDALKCDVTSALREIRAQLEGHAVQSTLQSEEWFRVRLDRLSEAAKVNTDAMRSAQEEITEYRRQLQARTTELEALKSTKESLERQRSELEDRHQADIASYQDAIQQLDSELRNTKWEMAAQLREYQDLLNVKMALDIEIAAYRKLLEGEECRIGFGPSPFSLTEGLPKIPSISTHIKVKSEEMIKVVEKSEKETVIVEGQTEEIRVTEGVTEEEDKEAQGQEGEEAEEGEEKEEEEGAAATSPPAEEAASPEKETKSRVKEEAKSPGEAKSPGEAKSPAEAKSPGEAKSPGEAKSPGEAKSPAEPKSPAEPKSPAEAKSPAEPKSPATVKSPGEAKSPSEAKSPAEAKSPAEAKSPAEAKSPAEAKSPAEAKSPAEAKSPATVKSPGEAKSPSEAKSPAEAKSPAEAKSPAEAKSPAEVKSPGEAKSPAEPKSPAEAKSPAEVKSPAEAKSPAEVKSPGEAKSPAAVKSPAEAKSPAAVKSPGEAKSPGEAKSPAEAKSPAEAKSPIEVKSPEKAKTPVKEGAKSPAEAKSPEKAKSPVKEDIKPPAEAKSPEKAKSPVKEGAKPPEKAKPLDVKSPEAQTPVQEEAKHPTDIRPPEQVKSPAKEKAKSPEKEEAKTSEKVAPKKEEVKSPVKEEVKAKEPPKKVEEEKTLPTPKTEAKESKKDEAPKEAPKPKVEEKKETPTEKPKDSTAEAKKEEAGEKKKAVASEEETPAKLGVKEEAKPKEKTETTKTEAEDTKAKEPSKPTETEKPKKEEMPAAPEKKDTKEEKTTESRKPEEKPKMEAKVKEDDKSLSKEPSKPKTEKAEKSSSTDQKESQPPEKTTEDKATKGEK.

The tract at residues 2 to 98 (MSFGSADALL…AVAARSEKEQ (97 aa)) is head. Serine 74 and serine 122 each carry phosphoserine. One can recognise an IF rod domain in the interval 95 to 411 (EKEQLQALND…KLLEGEECRI (317 aa)). The segment at 99–130 (LQALNDRFAGYIDKVRQLEAHNRSLEGEAAAL) is coil 1A. The tract at residues 131 to 143 (RQQQAGRAAMGEL) is linker 1. The coil 1B stretch occupies residues 144 to 242 (YEREVREMRG…QEEVGELLGQ (99 aa)). The segment at 243 to 264 (IQGCGAAQAQAQAEARDALKCD) is linker 12. The tract at residues 265–286 (VTSALREIRAQLEGHAVQSTLQ) is coil 2A. Residues 287–290 (SEEW) are linker 2. Positions 291–411 (FRVRLDRLSE…KLLEGEECRI (121 aa)) are coil 2B. Residues serine 345, serine 416, and serine 419 each carry the phosphoserine modification. Residues 412 to 1090 (GFGPSPFSLT…TEDKATKGEK (679 aa)) form a tail region. The segment at 456–1090 (EGQTEEIRVT…TEDKATKGEK (635 aa)) is disordered. Positions 468–495 (VTEEEDKEAQGQEGEEAEEGEEKEEEEG) are enriched in acidic residues. Residues 496–506 (AAATSPPAEEA) are compositionally biased toward low complexity. Serine 508, serine 523, serine 529, serine 535, serine 541, serine 547, serine 553, serine 559, serine 565, serine 571, serine 577, serine 583, serine 589, serine 595, serine 601, serine 607, serine 613, serine 619, serine 625, serine 631, serine 637, serine 643, serine 649, serine 655, serine 661, serine 667, serine 673, serine 679, serine 685, serine 691, serine 697, serine 703, serine 709, serine 715, serine 721, serine 727, serine 733, serine 739, serine 745, serine 751, serine 757, serine 763, and serine 769 each carry phosphoserine. Basic and acidic residues predominate over residues 508-579 (SPEKETKSRV…KSPAEAKSPA (72 aa)). Tandem repeats lie at residues 522-527 (KSPGEA), 528-533 (KSPGEA), 534-539 (KSPAEA), 540-545 (KSPGEA), 546-551 (KSPGEA), 552-557 (KSPGEA), 558-563 (KSPAEP), 564-569 (KSPAEP), 570-575 (KSPAEA), 576-581 (KSPAEP), 582-587 (KSPATV), 588-593 (KSPGEA), 594-599 (KSPSEA), 600-605 (KSPAEA), 606-611 (KSPAEA), 612-617 (KSPAEA), 618-623 (KSPAEA), 624-629 (KSPAEA), 630-635 (KSPAEA), 636-641 (KSPATV), 642-647 (KSPGEA), 648-653 (KSPSEA), 654-659 (KSPAEA), 660-665 (KSPAEA), 666-671 (KSPAEA), 672-677 (KSPAEV), 678-683 (KSPGEA), 684-689 (KSPAEP), 690-695 (KSPAEA), 696-701 (KSPAEV), 702-707 (KSPAEA), 708-713 (KSPAEV), 714-719 (KSPGEA), 720-725 (KSPAAV), 726-731 (KSPAEA), 732-737 (KSPAAV), 738-743 (KSPGEA), 744-749 (KSPGEA), 750-755 (KSPAEA), 756-761 (KSPAEA), 762-767 (KSPIEV), and 768-773 (KSPEKA). The interval 522–892 (KSPGEAKSPG…KEEVKSPVKE (371 aa)) is 52 X 6 AA approximate tandem repeats of K-S-P-[AGISV]-[EATK]-[APVQ]. Positions 595 to 633 (SPSEAKSPAEAKSPAEAKSPAEAKSPAEAKSPAEAKSPA) are enriched in basic and acidic residues. The segment covering 649–717 (SPSEAKSPAE…KSPAEVKSPG (69 aa)) has biased composition (basic and acidic residues). The span at 745-781 (SPGEAKSPAEAKSPAEAKSPIEVKSPEKAKTPVKEGA) shows a compositional bias: basic and acidic residues. Residues 774–779 (KTPVKE) form a 43; approximate repeat. 6 consecutive repeat copies span residues 782–787 (KSPAEA), 788–793 (KSPEKA), 794–799 (KSPVKE), 808–813 (KSPEKA), 814–819 (KSPVKE), and 833–838 (KSPEAQ). Phosphoserine occurs at positions 783, 789, 795, 809, 815, and 834. The segment covering 788 to 834 (KSPEKAKSPVKEDIKPPAEAKSPEKAKSPVKEGAKPPEKAKPLDVKS) has biased composition (basic and acidic residues). Threonine 839 carries the phosphothreonine modification. Basic and acidic residues-rich tracts occupy residues 843–964 (EEAK…KAVA) and 974–1090 (GVKE…KGEK). A run of 3 repeats spans residues 858 to 863 (KSPAKE), 866 to 871 (KSPEKE), and 887 to 892 (KSPVKE). Serine 859, serine 867, serine 888, and serine 947 each carry phosphoserine.

The protein belongs to the intermediate filament family. Forms heterodimers with NEFL; which can further hetero-oligomerize (in vitro). Forms heterodimers with INA (in vitro). Post-translationally, there are a number of repeats of the tripeptide K-S-P, NFH is phosphorylated on a number of the serines in this motif. It is thought that phosphorylation of NFH results in the formation of interfilament cross bridges that are important in the maintenance of axonal caliber. In terms of processing, phosphorylation seems to play a major role in the functioning of the larger neurofilament polypeptides (NF-M and NF-H), the levels of phosphorylation being altered developmentally and coincidentally with a change in the neurofilament function. Phosphorylated in the head and rod regions by the PKC kinase PKN1, leading to the inhibition of polymerization. As to expression, expressed in the sciatic nerve (at protein level).

The protein resides in the cytoplasm. It is found in the cytoskeleton. The protein localises to the cell projection. Its subcellular location is the axon. Its function is as follows. Neurofilaments usually contain three intermediate filament proteins: NEFL, NEFM, and NEFH which are involved in the maintenance of neuronal caliber. NEFH has an important function in mature axons that is not subserved by the two smaller NF proteins. May additionally cooperate with the neuronal intermediate filament proteins PRPH and INA to form neuronal filamentous networks. The chain is Neurofilament heavy polypeptide (Nefh) from Mus musculus (Mouse).